Consider the following 129-residue polypeptide: Small ribosomal subunit protein uS11 (129 aa).

This sequence belongs to the universal ribosomal protein uS11 family. As to quaternary structure, part of the 30S ribosomal subunit. Interacts with proteins S7 and S18. Binds to IF-3.

Functionally, located on the platform of the 30S subunit, it bridges several disparate RNA helices of the 16S rRNA. Forms part of the Shine-Dalgarno cleft in the 70S ribosome. The sequence is that of Small ribosomal subunit protein uS11 from Tolumonas auensis (strain DSM 9187 / NBRC 110442 / TA 4).